The sequence spans 230 residues: UPF0173 metal-dependent hydrolase Acid_3917 (230 aa).

Belongs to the UPF0173 family.

In Solibacter usitatus (strain Ellin6076), this protein is UPF0173 metal-dependent hydrolase Acid_3917.